The following is a 512-amino-acid chain: Transactivator/viroplasmin protein (512 aa).

Disordered regions lie at residues 76–123 (GNER…NPVA) and 474–512 (ADSS…IPSI). Positions 476-487 (SSSTSGEQNNVE) are enriched in polar residues. The segment covering 499–512 (YDERSDDHKRIPSI) has biased composition (basic and acidic residues).

The protein belongs to the caulimoviridae viroplasmin family.

Its subcellular location is the host cytoplasm. Its function is as follows. Enhances the translation of downstream ORFs on polycistronic mRNAs derived from figwort mosaic virus. In Figwort mosaic virus (strain DxS) (FMV), this protein is Transactivator/viroplasmin protein.